The primary structure comprises 137 residues: Nucleoside diphosphate kinase (137 aa).

The ATP site is built by K9, F57, R85, T91, R102, and N112. H115 serves as the catalytic Pros-phosphohistidine intermediate.

This sequence belongs to the NDK family. In terms of assembly, homotetramer. Mg(2+) serves as cofactor.

The protein localises to the cytoplasm. It carries out the reaction a 2'-deoxyribonucleoside 5'-diphosphate + ATP = a 2'-deoxyribonucleoside 5'-triphosphate + ADP. It catalyses the reaction a ribonucleoside 5'-diphosphate + ATP = a ribonucleoside 5'-triphosphate + ADP. Its function is as follows. Major role in the synthesis of nucleoside triphosphates other than ATP. The ATP gamma phosphate is transferred to the NDP beta phosphate via a ping-pong mechanism, using a phosphorylated active-site intermediate. The chain is Nucleoside diphosphate kinase from Helicobacter hepaticus (strain ATCC 51449 / 3B1).